Reading from the N-terminus, the 115-residue chain is Small ribosomal subunit protein bS6 (115 aa).

The protein belongs to the bacterial ribosomal protein bS6 family.

In terms of biological role, binds together with bS18 to 16S ribosomal RNA. The polypeptide is Small ribosomal subunit protein bS6 (Picosynechococcus sp. (strain ATCC 27264 / PCC 7002 / PR-6) (Agmenellum quadruplicatum)).